The following is a 355-amino-acid chain: cGAMP-activated phospholipase (355 aa).

Residues 17 to 214 (LSLNGGGARG…VANNPSFIGL (198 aa)) enclose the PNPLA domain. Positions 21–26 (GGGARG) match the GXGXXG motif. The short motif at 60 to 64 (GTSIG) is the GXSXG element. Ser62 serves as the catalytic Nucleophile. Asp201 acts as the Proton acceptor in catalysis. Residues 201–203 (DGG) carry the DGA/G motif.

This sequence belongs to the patatin family.

It carries out the reaction a 1,2-diacyl-sn-glycero-3-phosphocholine + H2O = a 2-acyl-sn-glycero-3-phosphocholine + a fatty acid + H(+). The enzyme catalyses 1,2-di-(9Z-octadecenoyl)-sn-glycero-3-phosphoethanolamine + 2 H2O = sn-glycero-3-phosphoethanolamine + 2 (9Z)-octadecenoate + 2 H(+). With respect to regulation, phospholipase activity is specifically activated upon 3',3'-cGAMP (cGAMP) binding. Is not activated by the other cyclic dinucleotides 3',3'-cUAMP, 3',3'-c-diAMP and 3',3'-c-diGMP. Therefore, is specifically activated by only the nucleotide synthesized from its adjacently encoded nucleotidyltransferase (DncV). The cGAMP-activation of lipase is inhibited by T4 phage protein Acb2 (Vs.4). Effector phospholipase of a CBASS antiviral system. CBASS (cyclic oligonucleotide-based antiphage signaling system) provides immunity against bacteriophages. The CD-NTase protein (DncV) synthesizes cyclic nucleotides in response to infection; these serve as specific second messenger signals. The signals activate a diverse range of effectors, leading to bacterial cell death and thus abortive phage infection. A type II-A(GA) CBASS system. In terms of biological role, phospholipase that is activated upon binding to the cyclic dinucleotide (CDN) second messenger 3',3'-cyclic GMP-AMP (3',3'-cGAMP). Then degrades phosphatidylethanolamine (PE) and phosphatidylglycerol (PG), the major phospholipids in the cell membrane of V.cholerae, releasing 16:1 and 18:1 free fatty acids. Upon expression in E.coli with cognate DncV, the cell inner membrane shrinks and separates from the cell wall. Its function is as follows. Protects E.coli against phage infection. When the CBASS operon (capV-dncV-cap2-cap3) is introduced in E.coli MG1655 there is about 100-fold protection against phages P1 and T2. When the operon is introduced in E.coli MG1655 there is a more than 10(3) decrease in the efficiency of T2 plaque formation. Protects 100-fold against phage T5, offers no protection against T7. When the operon is introduced in E.coli MG1655 it protects against phages T2, T4, T5 and T6. Another paper shows the operon confers protection against phages P1, T2, T5 and T6 but not T4 or lambda. This is cGAMP-activated phospholipase from Vibrio cholerae serotype O1 (strain ATCC 39315 / El Tor Inaba N16961).